The chain runs to 193 residues: Dense granule protein 2 (193 aa).

A glycan (N-linked (GlcNAc...) asparagine) is linked at asparagine 4. A helical transmembrane segment spans residues 14–34 (FSPLTVVMLAVTLVAFMGVPL). Asparagine 74 carries N-linked (GlcNAc...) asparagine glycosylation. A disordered region spans residues 75-140 (SSELAGSRDK…APKPVPVRSA (66 aa)). The segment covering 88–98 (EAEEEAAEVET) has biased composition (acidic residues). Residues 153–173 (HRVIGTAVIAAVVAALLWKFS) traverse the membrane as a helical segment. The segment at 174 to 193 (RRRSGAPREGGENENGGEEK) is disordered.

The protein belongs to the Gra6 family.

Its subcellular location is the membrane. In Neospora caninum (Coccidian parasite), this protein is Dense granule protein 2 (DG2).